Consider the following 158-residue polypeptide: MSTEKTYPMTQEGKQKLENELEQLKTVRRKEVVERIKIARSFGDLSENSEYDAAKDEQAFVEGRITQLENMIRNAVIIKDTGEVSTVVTLGKTVTFKELPNGDEEAYTIVGSAEADPFEGRISNDSPIAKSLLGKQIGEKVTIQTPGGEMQVEIVSVK.

Residues threonine 3–alanine 75 adopt a coiled-coil conformation.

The protein belongs to the GreA/GreB family.

In terms of biological role, necessary for efficient RNA polymerase transcription elongation past template-encoded arresting sites. The arresting sites in DNA have the property of trapping a certain fraction of elongating RNA polymerases that pass through, resulting in locked ternary complexes. Cleavage of the nascent transcript by cleavage factors such as GreA or GreB allows the resumption of elongation from the new 3'terminus. GreA releases sequences of 2 to 3 nucleotides. This chain is Transcription elongation factor GreA, found in Bacillus cereus (strain ATCC 14579 / DSM 31 / CCUG 7414 / JCM 2152 / NBRC 15305 / NCIMB 9373 / NCTC 2599 / NRRL B-3711).